We begin with the raw amino-acid sequence, 457 residues long: Adenylosuccinate synthetase isozyme 1 (457 aa).

A disordered region spans residues 1-25 (MSGTRASNDRPPSAGGVKRGRLQHE). Residues 42-48 (GDEGKGK) and 70-72 (GHT) each bind GTP. The active-site Proton acceptor is D43. Residues D43 and G70 each coordinate Mg(2+). D43 lines the substrate pocket. IMP contacts are provided by residues 43 to 46 (DEGK), 68 to 71 (NAGH), T163, R177, N256, T271, and R335. The Proton donor role is filled by H71. 331–337 (VTTGRKR) is a binding site for substrate. GTP is bound by residues R337, 363 to 365 (KLD), and 445 to 448 (GVGK).

The protein belongs to the adenylosuccinate synthetase family. As to quaternary structure, homodimer. It depends on Mg(2+) as a cofactor.

The protein resides in the cytoplasm. The enzyme catalyses IMP + L-aspartate + GTP = N(6)-(1,2-dicarboxyethyl)-AMP + GDP + phosphate + 2 H(+). It participates in purine metabolism; AMP biosynthesis via de novo pathway; AMP from IMP: step 1/2. Functionally, component of the purine nucleotide cycle (PNC), which interconverts IMP and AMP to regulate the nucleotide levels in various tissues, and which contributes to glycolysis and ammoniagenesis. Catalyzes the first committed step in the biosynthesis of AMP from IMP. The polypeptide is Adenylosuccinate synthetase isozyme 1 (Bos taurus (Bovine)).